We begin with the raw amino-acid sequence, 396 residues long: S-adenosylmethionine synthase (396 aa).

His-16 serves as a coordination point for ATP. Residue Asp-18 coordinates Mg(2+). Glu-44 provides a ligand contact to K(+). L-methionine is bound by residues Glu-57 and Gln-100. The tract at residues 100–110 (QSVDIAQGVDR) is flexible loop. ATP-binding positions include 165–167 (DAK), Asp-240, 246–247 (RK), Ala-263, and Lys-267. An L-methionine-binding site is contributed by Asp-240. Residue Lys-271 coordinates L-methionine.

This sequence belongs to the AdoMet synthase family. Homotetramer; dimer of dimers. The cofactor is Mg(2+). K(+) serves as cofactor.

The protein resides in the cytoplasm. The catalysed reaction is L-methionine + ATP + H2O = S-adenosyl-L-methionine + phosphate + diphosphate. The protein operates within amino-acid biosynthesis; S-adenosyl-L-methionine biosynthesis; S-adenosyl-L-methionine from L-methionine: step 1/1. Its function is as follows. Catalyzes the formation of S-adenosylmethionine (AdoMet) from methionine and ATP. The overall synthetic reaction is composed of two sequential steps, AdoMet formation and the subsequent tripolyphosphate hydrolysis which occurs prior to release of AdoMet from the enzyme. In Stutzerimonas stutzeri (strain A1501) (Pseudomonas stutzeri), this protein is S-adenosylmethionine synthase.